A 472-amino-acid chain; its full sequence is Pentatricopeptide repeat-containing protein At5g46100 (472 aa).

PPR repeat units follow at residues 50–84 (DQSSFGYMVLRLVSANKFKAAEDLIVRMKIENCVV), 85–119 (SEDILLSICRGYGRVHRPFDSLRVFHKMKDFDCDP), 120–154 (SQKAYVTVLAILVEENQLNLAFKFYKNMREIGLPP), 155–190 (TVASLNVLIKALCRNDGTVDAGLKIFLEMPKRGCDP), 191–225 (DSYTYGTLISGLCRFGRIDEAKKLFTEMVEKDCAP), 226–260 (TVVTYTSLINGLCGSKNVDEAMRYLEEMKSKGIEP), 261–295 (NVFTYSSLMDGLCKDGRSLQAMELFEMMMARGCRP), 296–330 (NMVTYTTLITGLCKEQKIQEAVELLDRMNLQGLKP), 331–365 (DAGLYGKVISGFCAISKFREAANFLDEMILGGITP), 373–406 (HVKTSNEVVRGLCANYPSRAFTLYLSMRSRGISV), and 407–441 (EVETLESLVKCLCKKGEFQKAVQLVDEIVTDGCIP).

It belongs to the PPR family. P subfamily.

In Arabidopsis thaliana (Mouse-ear cress), this protein is Pentatricopeptide repeat-containing protein At5g46100.